The chain runs to 313 residues: Putative serine protease 29 (313 aa).

Positions 1 to 22 (MPTTPDPGSEPPARTPRPPPLT) are enriched in pro residues. The interval 1 to 27 (MPTTPDPGSEPPARTPRPPPLTPGLSP) is disordered. Residues 68–310 (IVGGHNAPPG…YVPWILQQVG (243 aa)) form the Peptidase S1 domain. A disulfide bridge links cysteine 99 with cysteine 115. Histidine 114 serves as the catalytic Charge relay system. N-linked (GlcNAc...) asparagine glycosylation occurs at asparagine 143. Catalysis depends on aspartate 161, which acts as the Charge relay system. Cystine bridges form between cysteine 193–cysteine 268, cysteine 226–cysteine 249, and cysteine 258–cysteine 286. Serine 262 acts as the Charge relay system in catalysis.

Belongs to the peptidase S1 family.

Its subcellular location is the secreted. This chain is Putative serine protease 29 (PRSS29P), found in Homo sapiens (Human).